Consider the following 364-residue polypeptide: GDSL esterase/lipase 7 (364 aa).

The signal sequence occupies residues 1-19 (MKSLLICLVLLELVWLGNG). Ser-37 functions as the Nucleophile in the catalytic mechanism. 3 N-linked (GlcNAc...) asparagine glycosylation sites follow: Asn-236, Asn-237, and Asn-264. Active-site residues include Asp-329 and His-332. Residue Asn-351 is glycosylated (N-linked (GlcNAc...) asparagine).

This sequence belongs to the 'GDSL' lipolytic enzyme family.

It localises to the secreted. This is GDSL esterase/lipase 7 (GLIP7) from Arabidopsis thaliana (Mouse-ear cress).